Reading from the N-terminus, the 276-residue chain is MDFWTAFQAIILGVVEGLTEFLPISSTGHQIIVADLIGFGGERAMAFNIIIQLAAILAVVWEFRRKILDVVFGLKSQPAARRFTANLLLAFMPAVVLGVLFADLIHEYLFNPITVATALVIGGVIMLWAERRTHSVAVDHVDDMRWSHALKIGFVQCLAMIPGTSRSGSTIIGGLLFGLSRKAATEFSFFLAMPTMVGAAVYSGYKYRDLFQPSDLPVFAIGFVTSFIFAMIAVRGLLKFIANHSYAAFAWYRIAFGLLILATWQFGWVDWSTAHG.

6 consecutive transmembrane segments (helical) span residues 43-63 (RAMA…VWEF), 85-105 (ANLL…ADLI), 109-129 (LFNP…MLWA), 183-203 (AATE…AVYS), 214-234 (SDLP…MIAV), and 249-269 (FAWY…FGWV).

Belongs to the UppP family.

It is found in the cell inner membrane. It carries out the reaction di-trans,octa-cis-undecaprenyl diphosphate + H2O = di-trans,octa-cis-undecaprenyl phosphate + phosphate + H(+). Its function is as follows. Catalyzes the dephosphorylation of undecaprenyl diphosphate (UPP). Confers resistance to bacitracin. The sequence is that of Undecaprenyl-diphosphatase from Pseudomonas putida (strain W619).